The following is an 831-amino-acid chain: Replication restart protein PriA (831 aa).

The 168-residue stretch at 304–471 folds into the Helicase ATP-binding domain; that stretch reads VLPLQGYHQV…HRHQNDPQRH (168 aa). 317–324 provides a ligand contact to ATP; the sequence is GVTGSGKT. The short motif at 413-416 is the DEAH box element; that stretch reads DEEH. Residues Cys537, Cys540, Cys546, Cys549, Cys568, Cys571, Cys581, and Cys584 each contribute to the Zn(2+) site. Residues 575–735 form the Helicase C-terminal domain; the sequence is EIQPKVCPEC…ELPQREMLNY (161 aa).

It belongs to the helicase family. PriA subfamily. As to quaternary structure, component of the replication restart primosome. Zn(2+) is required as a cofactor.

It carries out the reaction Couples ATP hydrolysis with the unwinding of duplex DNA by translocating in the 3'-5' direction.. The catalysed reaction is ATP + H2O = ADP + phosphate + H(+). Functionally, initiates the restart of stalled replication forks, which reloads the replicative helicase on sites other than the origin of replication. Recognizes and binds to abandoned replication forks and remodels them to uncover a helicase loading site. Promotes assembly of the primosome at these replication forks. The sequence is that of Replication restart protein PriA from Synechocystis sp. (strain ATCC 27184 / PCC 6803 / Kazusa).